The chain runs to 469 residues: Glutamate--tRNA ligase 1 (469 aa).

The short motif at 10-20 is the 'HIGH' region element; it reads PSPTGYLHVGG. Residues 252–256 carry the 'KMSKS' region motif; it reads KLSKR. Residue K255 coordinates ATP.

The protein belongs to the class-I aminoacyl-tRNA synthetase family. Glutamate--tRNA ligase type 1 subfamily. As to quaternary structure, monomer.

Its subcellular location is the cytoplasm. It catalyses the reaction tRNA(Glu) + L-glutamate + ATP = L-glutamyl-tRNA(Glu) + AMP + diphosphate. Catalyzes the attachment of glutamate to tRNA(Glu) in a two-step reaction: glutamate is first activated by ATP to form Glu-AMP and then transferred to the acceptor end of tRNA(Glu). The sequence is that of Glutamate--tRNA ligase 1 from Fervidobacterium nodosum (strain ATCC 35602 / DSM 5306 / Rt17-B1).